The chain runs to 127 residues: Membrane-bound lysozyme inhibitor of C-type lysozyme (127 aa).

Residues 1-18 (MKKALWLLLAAVPVVLVA) form the signal peptide. The N-palmitoyl cysteine moiety is linked to residue C19. C19 is lipidated: S-diacylglycerol cysteine. C51 and C124 are oxidised to a cystine.

It belongs to the MliC family. Type 2 subfamily. As to quaternary structure, homodimer.

Its subcellular location is the cell outer membrane. Its function is as follows. Specifically inhibits C-type lysozymes. The polypeptide is Membrane-bound lysozyme inhibitor of C-type lysozyme (Pseudomonas aeruginosa (strain ATCC 15692 / DSM 22644 / CIP 104116 / JCM 14847 / LMG 12228 / 1C / PRS 101 / PAO1)).